The sequence spans 342 residues: S-adenosylmethionine:tRNA ribosyltransferase-isomerase (342 aa).

The protein belongs to the QueA family. In terms of assembly, monomer.

Its subcellular location is the cytoplasm. The catalysed reaction is 7-aminomethyl-7-carbaguanosine(34) in tRNA + S-adenosyl-L-methionine = epoxyqueuosine(34) in tRNA + adenine + L-methionine + 2 H(+). The protein operates within tRNA modification; tRNA-queuosine biosynthesis. Its function is as follows. Transfers and isomerizes the ribose moiety from AdoMet to the 7-aminomethyl group of 7-deazaguanine (preQ1-tRNA) to give epoxyqueuosine (oQ-tRNA). This Streptococcus agalactiae serotype V (strain ATCC BAA-611 / 2603 V/R) protein is S-adenosylmethionine:tRNA ribosyltransferase-isomerase.